The primary structure comprises 127 residues: Large ribosomal subunit protein bL17 (127 aa).

This sequence belongs to the bacterial ribosomal protein bL17 family. Part of the 50S ribosomal subunit. Contacts protein L32.

This chain is Large ribosomal subunit protein bL17, found in Legionella pneumophila (strain Paris).